The sequence spans 440 residues: C-terminal-binding protein 1 (440 aa).

Residues serine 100, 180–185 (IGLGRV), aspartate 204, 237–243 (CGLNEHN), 264–266 (TAR), and aspartate 290 each bind NAD(+). Residue arginine 266 is part of the active site. Residue glutamate 295 is part of the active site. Histidine 315 acts as the Proton donor in catalysis. 315 to 318 (HAAW) contributes to the NAD(+) binding site. A disordered region spans residues 409–440 (HAHPAVAHPPHAPSPGQTIKPEADRDHPSDQL). Residues 429–440 (PEADRDHPSDQL) are compositionally biased toward basic and acidic residues.

This sequence belongs to the D-isomer specific 2-hydroxyacid dehydrogenase family. NAD(+) serves as cofactor.

The protein localises to the nucleus. Corepressor targeting diverse transcription regulators. Has dehydrogenase activity. The sequence is that of C-terminal-binding protein 1 (ctbp1) from Xenopus laevis (African clawed frog).